The following is a 510-amino-acid chain: Polyamine aminopropyltransferase 2 (510 aa).

Transmembrane regions (helical) follow at residues 6–26 (ALLV…ELIA), 38–58 (ILQF…GSWV), 74–94 (LELL…LLFA), 102–122 (LVLY…IPLV), 140–160 (VLTF…LVLA), and 165–185 (LVRT…WTLW). The PABS domain occupies 205 to 449 (AGMVGAALLA…GEWGFILAAP (245 aa)). The spermidine synthase stretch occupies residues 207-456 (MVGAALLAGF…AAPGRADFRP (250 aa)). An S-methyl-5'-thioadenosine-binding site is contributed by glutamine 244. The spermidine site is built by histidine 274 and aspartate 298. S-methyl-5'-thioadenosine contacts are provided by residues aspartate 318 and 352–353 (DA). Aspartate 370 (proton acceptor) is an active-site residue.

It belongs to the spermidine/spermine synthase family. As to quaternary structure, homodimer or homotetramer.

Its subcellular location is the cell membrane. The enzyme catalyses S-adenosyl 3-(methylsulfanyl)propylamine + putrescine = S-methyl-5'-thioadenosine + spermidine + H(+). The protein operates within amine and polyamine biosynthesis; spermidine biosynthesis; spermidine from putrescine: step 1/1. In terms of biological role, catalyzes the irreversible transfer of a propylamine group from the amino donor S-adenosylmethioninamine (decarboxy-AdoMet) to putrescine (1,4-diaminobutane) to yield spermidine. The protein is Polyamine aminopropyltransferase 2 of Ralstonia nicotianae (strain ATCC BAA-1114 / GMI1000) (Ralstonia solanacearum).